A 412-amino-acid chain; its full sequence is Protein Mb3436c (412 aa).

The residue at position 227 (K227) is an N6-(pyridoxal phosphate)lysine.

It belongs to the DegT/DnrJ/EryC1 family.

The polypeptide is Protein Mb3436c (Mycobacterium bovis (strain ATCC BAA-935 / AF2122/97)).